We begin with the raw amino-acid sequence, 375 residues long: tRNA-specific 2-thiouridylase MnmA (375 aa).

ATP-binding positions include Gly-8–Ser-15 and Met-34. Residues Asn-104–Asp-106 are interaction with target base in tRNA. Cys-109 functions as the Nucleophile in the catalytic mechanism. An intrachain disulfide couples Cys-109 to Cys-205. An ATP-binding site is contributed by Gly-133. Positions Lys-155–Gln-157 are interaction with tRNA. Cys-205 (cysteine persulfide intermediate) is an active-site residue. Positions Arg-313–Tyr-314 are interaction with tRNA.

Belongs to the MnmA/TRMU family.

The protein resides in the cytoplasm. It catalyses the reaction S-sulfanyl-L-cysteinyl-[protein] + uridine(34) in tRNA + AH2 + ATP = 2-thiouridine(34) in tRNA + L-cysteinyl-[protein] + A + AMP + diphosphate + H(+). Functionally, catalyzes the 2-thiolation of uridine at the wobble position (U34) of tRNA, leading to the formation of s(2)U34. The sequence is that of tRNA-specific 2-thiouridylase MnmA from Acholeplasma laidlawii (strain PG-8A).